Consider the following 312-residue polypeptide: Ankyrin repeat family A protein 2 (312 aa).

5 ANK repeats span residues 147–179 (ANSL…HTDE), 180–212 (EGFT…LLGK), 213–245 (GRES…EYDW), 246–278 (NGGT…IETD), and 279–312 (SGYN…NIRE).

As to quaternary structure, interacts (via ANK repeats) with CCDC8 (via PxLPxI/L motif); mediates the interaction with the 3M complex which is composed of CCDC8, CUL7 and OBSL1. Interacts (via ANK repeats) with HDAC4 (via PxLPxI/L motif). Interacts (via ANK repeats) with HDAC5 (via PxLPxI/L motif). Interacts (via ANK repeats) with LRP2/megalin (via PxLPxI/L motif). Interacts (via ANK repeats) with RFX7 (via PxLPxI/L motif). Interacts with AHRR. Interacts with NEK6.

Its subcellular location is the cytoplasm. The protein localises to the cytoskeleton. The protein resides in the membrane. May regulate the interaction between the 3M complex and the histone deacetylases HDAC4 and HDAC5. May also regulate LRP2/megalin. In Mus musculus (Mouse), this protein is Ankyrin repeat family A protein 2 (Ankra2).